We begin with the raw amino-acid sequence, 216 residues long: uncharacterized protein (216 aa).

This is an uncharacterized protein from Caenorhabditis elegans.